Here is a 391-residue protein sequence, read N- to C-terminus: Chalcone synthase (391 aa).

Cysteine 164 is an active-site residue.

Belongs to the thiolase-like superfamily. Chalcone/stilbene synthases family.

The enzyme catalyses (E)-4-coumaroyl-CoA + 3 malonyl-CoA + 3 H(+) = 2',4,4',6'-tetrahydroxychalcone + 3 CO2 + 4 CoA. It participates in secondary metabolite biosynthesis; flavonoid biosynthesis. Its function is as follows. The primary product of this enzyme is 4,2',4',6'-tetrahydroxychalcone (also termed naringenin-chalcone or chalcone) which can under specific conditions spontaneously isomerize into naringenin. The polypeptide is Chalcone synthase (CHS) (Dianthus monspessulanus).